The chain runs to 229 residues: Ion-translocating oxidoreductase complex subunit E (229 aa).

A run of 5 helical transmembrane segments spans residues Leu58–Phe78, Ile82–Ile102, Leu105–Val125, Ala147–Ile167, and Gly201–Val221.

This sequence belongs to the NqrDE/RnfAE family. As to quaternary structure, the complex is composed of six subunits: RnfA, RnfB, RnfC, RnfD, RnfE and RnfG.

The protein resides in the cell inner membrane. In terms of biological role, part of a membrane-bound complex that couples electron transfer with translocation of ions across the membrane. This is Ion-translocating oxidoreductase complex subunit E from Glaesserella parasuis serovar 5 (strain SH0165) (Haemophilus parasuis).